Reading from the N-terminus, the 236-residue chain is tRNA (guanine-N(1)-)-methyltransferase (236 aa).

S-adenosyl-L-methionine contacts are provided by residues Gly-112 and 132–137; that span reads VGDFIL.

It belongs to the RNA methyltransferase TrmD family. In terms of assembly, homodimer.

It is found in the cytoplasm. The enzyme catalyses guanosine(37) in tRNA + S-adenosyl-L-methionine = N(1)-methylguanosine(37) in tRNA + S-adenosyl-L-homocysteine + H(+). In terms of biological role, specifically methylates guanosine-37 in various tRNAs. This chain is tRNA (guanine-N(1)-)-methyltransferase, found in Campylobacter curvus (strain 525.92).